The chain runs to 387 residues: Queuine tRNA-ribosyltransferase (387 aa).

Residue aspartate 105 is the Proton acceptor of the active site. Substrate is bound by residues 105-109 (DSGGF), aspartate 177, and glycine 248. The interval 278–284 (GIGDLPS) is RNA binding. The Nucleophile role is filled by aspartate 297. Residues 302–306 (TRAAR) are RNA binding; important for wobble base 34 recognition. 4 residues coordinate Zn(2+): cysteine 335, cysteine 337, cysteine 340, and histidine 366.

The protein belongs to the queuine tRNA-ribosyltransferase family. Homodimer. Within each dimer, one monomer is responsible for RNA recognition and catalysis, while the other monomer binds to the replacement base PreQ1. Zn(2+) serves as cofactor.

It carries out the reaction 7-aminomethyl-7-carbaguanine + guanosine(34) in tRNA = 7-aminomethyl-7-carbaguanosine(34) in tRNA + guanine. The protein operates within tRNA modification; tRNA-queuosine biosynthesis. In terms of biological role, catalyzes the base-exchange of a guanine (G) residue with the queuine precursor 7-aminomethyl-7-deazaguanine (PreQ1) at position 34 (anticodon wobble position) in tRNAs with GU(N) anticodons (tRNA-Asp, -Asn, -His and -Tyr). Catalysis occurs through a double-displacement mechanism. The nucleophile active site attacks the C1' of nucleotide 34 to detach the guanine base from the RNA, forming a covalent enzyme-RNA intermediate. The proton acceptor active site deprotonates the incoming PreQ1, allowing a nucleophilic attack on the C1' of the ribose to form the product. After dissociation, two additional enzymatic reactions on the tRNA convert PreQ1 to queuine (Q), resulting in the hypermodified nucleoside queuosine (7-(((4,5-cis-dihydroxy-2-cyclopenten-1-yl)amino)methyl)-7-deazaguanosine). The polypeptide is Queuine tRNA-ribosyltransferase (Protochlamydia amoebophila (strain UWE25)).